A 658-amino-acid polypeptide reads, in one-letter code: MAELQTGKPTPLGASFDGQGVNFALFSADAERVELCIFDERQQEQRLELTARSGDIWHGYLPAAQPGLRYGFRVDGPFEPSQGLRFNPHKLLLDPCARQLDGWVVDDDCLQGGIDQRDERDSADIMAKCVVTAEDYDWQDDQHPHTLWHQTVIYEAHVRGLTQLHPDIPEDIRGSYAALGHPVMIDYLTSLGVTALELLPVQQHADEPRLQQLGLRNYWGYNVLLPFAVDNSLAAGDDALNEFRDAVKALHRAGIEVILDVVFNHSAELDVEGPTLCQRGIDNRSYYWLGENGEYHNWTGCGNVLRLNHPAVIDWVMDCLRFWREVCHVDGFRFDLATVLGRTPDFTAAAPLLSAMKNDSRLQGCKLIAEPWDIGHGGYQLGQFPTPFAEWSDRYRDDMRRFWLHGDISLGAFARRFAASSDIFQQHDRLPFASINKLTAHDGFTLRDLVSFNHKHNDANGEGNRDGTDSNFSNNHGTEGLEADDDILQRRLASQKALLTTLILSQGTPMLLAGDELGHSQQGNNNAYCQDNELTWLHWENANSALREFVAGLIQLRRTIPALQQETWWQEGDGAVQWLNREGQPLTPQQWEQGEHQLQILLSGRWLVLFNASLHAGEFMLPEGHWQVSPPFDETNPPEGGIWHGQAQAVCVLIKQTA.

Asp335 (nucleophile) is an active-site residue. The Proton donor role is filled by Glu370. Residues 457–468 are compositionally biased toward basic and acidic residues; that stretch reads NDANGEGNRDGT. Positions 457–478 are disordered; sequence NDANGEGNRDGTDSNFSNNHGT.

This sequence belongs to the glycosyl hydrolase 13 family.

It carries out the reaction Hydrolysis of (1-&gt;6)-alpha-D-glucosidic linkages to branches with degrees of polymerization of three or four glucose residues in limit dextrin.. It participates in glycan degradation; glycogen degradation. In terms of biological role, removes maltotriose and maltotetraose chains that are attached by 1,6-alpha-linkage to the limit dextrin main chain, generating a debranched limit dextrin. The chain is Glycogen debranching enzyme from Pectobacterium carotovorum subsp. carotovorum (strain PC1).